We begin with the raw amino-acid sequence, 305 residues long: MIPLIAIVGPTAVGKTALSIRLAQQFNGEIVSVDSRQVYRGMDIGTAKPTPAERAAVPHHLIDIVDPDEAFSLAVYQDLATAAIADIAARGRLPFLVGGTGQYLAAVLQGWQLPRVAPRPDIRAALERQAAELGAAALYARLAEIDPAAAASIPPNNIRRIIRALEVYEATGKPISEQRSVQPPPYHTVTIWLTLPTPALYARIDARVEAMIAAGLLDEVHRLLERGYHWDLPSMSGLGYREFRPYFEGRITLDEAIARLKYDTHAFARRQPAWFRRLPNVLTLPADASDLQQQAATIVRQWIDA.

9-16 (GPTAVGKT) serves as a coordination point for ATP. Substrate is bound at residue 11-16 (TAVGKT). Positions 34 to 37 (DSRQ) are interaction with substrate tRNA.

This sequence belongs to the IPP transferase family. In terms of assembly, monomer. Requires Mg(2+) as cofactor.

It catalyses the reaction adenosine(37) in tRNA + dimethylallyl diphosphate = N(6)-dimethylallyladenosine(37) in tRNA + diphosphate. In terms of biological role, catalyzes the transfer of a dimethylallyl group onto the adenine at position 37 in tRNAs that read codons beginning with uridine, leading to the formation of N6-(dimethylallyl)adenosine (i(6)A). The protein is tRNA dimethylallyltransferase of Roseiflexus sp. (strain RS-1).